We begin with the raw amino-acid sequence, 360 residues long: Phospho-N-acetylmuramoyl-pentapeptide-transferase (360 aa).

Transmembrane regions (helical) follow at residues 26-46 (AILG…KLIE), 74-94 (MGGL…GDLG), 97-117 (YVWV…IDDY), 132-152 (WKYI…YTTA), 168-188 (VMPQ…VGSS), 199-219 (GLAI…AYLS), 236-256 (SGEL…FLWF), 263-283 (VFMG…IAVL), 288-308 (ILLV…ILQV), and 338-358 (VIVR…ATLK).

It belongs to the glycosyltransferase 4 family. MraY subfamily. Mg(2+) is required as a cofactor.

The protein localises to the cell inner membrane. It carries out the reaction UDP-N-acetyl-alpha-D-muramoyl-L-alanyl-gamma-D-glutamyl-meso-2,6-diaminopimeloyl-D-alanyl-D-alanine + di-trans,octa-cis-undecaprenyl phosphate = di-trans,octa-cis-undecaprenyl diphospho-N-acetyl-alpha-D-muramoyl-L-alanyl-D-glutamyl-meso-2,6-diaminopimeloyl-D-alanyl-D-alanine + UMP. It participates in cell wall biogenesis; peptidoglycan biosynthesis. In terms of biological role, catalyzes the initial step of the lipid cycle reactions in the biosynthesis of the cell wall peptidoglycan: transfers peptidoglycan precursor phospho-MurNAc-pentapeptide from UDP-MurNAc-pentapeptide onto the lipid carrier undecaprenyl phosphate, yielding undecaprenyl-pyrophosphoryl-MurNAc-pentapeptide, known as lipid I. This is Phospho-N-acetylmuramoyl-pentapeptide-transferase from Shewanella sp. (strain ANA-3).